A 138-amino-acid chain; its full sequence is Nucleoside diphosphate kinase (138 aa).

ATP is bound by residues Lys9, Phe57, Arg85, Thr91, Arg102, and Asn112. His115 (pros-phosphohistidine intermediate) is an active-site residue.

This sequence belongs to the NDK family. As to quaternary structure, homotetramer. Requires Mg(2+) as cofactor.

Its subcellular location is the cytoplasm. The catalysed reaction is a 2'-deoxyribonucleoside 5'-diphosphate + ATP = a 2'-deoxyribonucleoside 5'-triphosphate + ADP. The enzyme catalyses a ribonucleoside 5'-diphosphate + ATP = a ribonucleoside 5'-triphosphate + ADP. Major role in the synthesis of nucleoside triphosphates other than ATP. The ATP gamma phosphate is transferred to the NDP beta phosphate via a ping-pong mechanism, using a phosphorylated active-site intermediate. This is Nucleoside diphosphate kinase from Lawsonia intracellularis (strain PHE/MN1-00).